The chain runs to 143 residues: Small ribosomal subunit protein uS12 (143 aa).

Residues 1-20 show a composition bias toward basic residues; the sequence is MGKCRGLRTARKLRSHRRDQ. Residues 1 to 26 form a disordered region; the sequence is MGKCRGLRTARKLRSHRRDQKWHDKQ. Lys-37 participates in a covalent cross-link: Glycyl lysine isopeptide (Lys-Gly) (interchain with G-Cter in SUMO2). Lys-54 is modified (N6-succinyllysine). Pro-62 bears the 3-hydroxyproline mark. Lys-135 is subject to N6-acetyllysine.

The protein belongs to the universal ribosomal protein uS12 family. In terms of assembly, component of the 40S small ribosomal subunit. Part of the small subunit (SSU) processome, composed of more than 70 proteins and the RNA chaperone small nucleolar RNA (snoRNA) U3. Hydroxylation at Pro-62 affects translation termination efficiency.

It localises to the cytoplasm. It is found in the cytosol. The protein localises to the rough endoplasmic reticulum. The protein resides in the nucleus. Its subcellular location is the nucleolus. Its function is as follows. Component of the ribosome, a large ribonucleoprotein complex responsible for the synthesis of proteins in the cell. The small ribosomal subunit (SSU) binds messenger RNAs (mRNAs) and translates the encoded message by selecting cognate aminoacyl-transfer RNA (tRNA) molecules. The large subunit (LSU) contains the ribosomal catalytic site termed the peptidyl transferase center (PTC), which catalyzes the formation of peptide bonds, thereby polymerizing the amino acids delivered by tRNAs into a polypeptide chain. The nascent polypeptides leave the ribosome through a tunnel in the LSU and interact with protein factors that function in enzymatic processing, targeting, and the membrane insertion of nascent chains at the exit of the ribosomal tunnel. Plays an important role in translational accuracy. Part of the small subunit (SSU) processome, first precursor of the small eukaryotic ribosomal subunit. During the assembly of the SSU processome in the nucleolus, many ribosome biogenesis factors, an RNA chaperone and ribosomal proteins associate with the nascent pre-rRNA and work in concert to generate RNA folding, modifications, rearrangements and cleavage as well as targeted degradation of pre-ribosomal RNA by the RNA exosome. The sequence is that of Small ribosomal subunit protein uS12 (RPS23) from Bos taurus (Bovine).